Here is a 188-residue protein sequence, read N- to C-terminus: Adenine phosphoribosyltransferase (188 aa).

This sequence belongs to the purine/pyrimidine phosphoribosyltransferase family. Homodimer.

It localises to the cytoplasm. The catalysed reaction is AMP + diphosphate = 5-phospho-alpha-D-ribose 1-diphosphate + adenine. Its pathway is purine metabolism; AMP biosynthesis via salvage pathway; AMP from adenine: step 1/1. Its function is as follows. Catalyzes a salvage reaction resulting in the formation of AMP, that is energically less costly than de novo synthesis. The polypeptide is Adenine phosphoribosyltransferase (Paraburkholderia phymatum (strain DSM 17167 / CIP 108236 / LMG 21445 / STM815) (Burkholderia phymatum)).